We begin with the raw amino-acid sequence, 278 residues long: 3-methyl-2-oxobutanoate hydroxymethyltransferase (278 aa).

The Mg(2+) site is built by Asp-43 and Asp-82. 3-methyl-2-oxobutanoate is bound by residues 43–44, Asp-82, and Lys-112; that span reads DS. Glu-114 provides a ligand contact to Mg(2+). Residue Glu-181 is the Proton acceptor of the active site.

The protein belongs to the PanB family. In terms of assembly, homodecamer; pentamer of dimers. Mg(2+) serves as cofactor.

The protein resides in the cytoplasm. It carries out the reaction 3-methyl-2-oxobutanoate + (6R)-5,10-methylene-5,6,7,8-tetrahydrofolate + H2O = 2-dehydropantoate + (6S)-5,6,7,8-tetrahydrofolate. It participates in cofactor biosynthesis; (R)-pantothenate biosynthesis; (R)-pantoate from 3-methyl-2-oxobutanoate: step 1/2. Catalyzes the reversible reaction in which hydroxymethyl group from 5,10-methylenetetrahydrofolate is transferred onto alpha-ketoisovalerate to form ketopantoate. The sequence is that of 3-methyl-2-oxobutanoate hydroxymethyltransferase from Desulfitobacterium hafniense (strain DSM 10664 / DCB-2).